Consider the following 456-residue polypeptide: Bifunctional protein GlmU (456 aa).

Residues 1–229 (MLNNAMSVVI…LSEVEGVNNR (229 aa)) form a pyrophosphorylase region. UDP-N-acetyl-alpha-D-glucosamine-binding positions include 11–14 (LAAG), lysine 25, glutamine 76, 81–82 (GT), 103–105 (YGD), glycine 140, glutamate 154, asparagine 169, and asparagine 227. Aspartate 105 serves as a coordination point for Mg(2+). Position 227 (asparagine 227) interacts with Mg(2+). The segment at 230 to 250 (LQLSRLERVYQSEQAEKLLLA) is linker. The interval 251-456 (GVMLRDPARF…EGWRRPVKKK (206 aa)) is N-acetyltransferase. The UDP-N-acetyl-alpha-D-glucosamine site is built by arginine 333 and lysine 351. The active-site Proton acceptor is histidine 363. Positions 366 and 377 each coordinate UDP-N-acetyl-alpha-D-glucosamine. Residues alanine 380, 386–387 (NY), serine 405, alanine 423, and arginine 440 contribute to the acetyl-CoA site.

This sequence in the N-terminal section; belongs to the N-acetylglucosamine-1-phosphate uridyltransferase family. In the C-terminal section; belongs to the transferase hexapeptide repeat family. In terms of assembly, homotrimer. Mg(2+) is required as a cofactor.

It is found in the cytoplasm. It carries out the reaction alpha-D-glucosamine 1-phosphate + acetyl-CoA = N-acetyl-alpha-D-glucosamine 1-phosphate + CoA + H(+). It catalyses the reaction N-acetyl-alpha-D-glucosamine 1-phosphate + UTP + H(+) = UDP-N-acetyl-alpha-D-glucosamine + diphosphate. Its pathway is nucleotide-sugar biosynthesis; UDP-N-acetyl-alpha-D-glucosamine biosynthesis; N-acetyl-alpha-D-glucosamine 1-phosphate from alpha-D-glucosamine 6-phosphate (route II): step 2/2. The protein operates within nucleotide-sugar biosynthesis; UDP-N-acetyl-alpha-D-glucosamine biosynthesis; UDP-N-acetyl-alpha-D-glucosamine from N-acetyl-alpha-D-glucosamine 1-phosphate: step 1/1. It functions in the pathway bacterial outer membrane biogenesis; LPS lipid A biosynthesis. Its function is as follows. Catalyzes the last two sequential reactions in the de novo biosynthetic pathway for UDP-N-acetylglucosamine (UDP-GlcNAc). The C-terminal domain catalyzes the transfer of acetyl group from acetyl coenzyme A to glucosamine-1-phosphate (GlcN-1-P) to produce N-acetylglucosamine-1-phosphate (GlcNAc-1-P), which is converted into UDP-GlcNAc by the transfer of uridine 5-monophosphate (from uridine 5-triphosphate), a reaction catalyzed by the N-terminal domain. The polypeptide is Bifunctional protein GlmU (Escherichia coli (strain 55989 / EAEC)).